The following is a 582-amino-acid chain: DNA mismatch repair protein MutL (582 aa).

It belongs to the DNA mismatch repair MutL/HexB family.

This protein is involved in the repair of mismatches in DNA. It is required for dam-dependent methyl-directed DNA mismatch repair. May act as a 'molecular matchmaker', a protein that promotes the formation of a stable complex between two or more DNA-binding proteins in an ATP-dependent manner without itself being part of a final effector complex. The protein is DNA mismatch repair protein MutL of Acidiphilium cryptum (strain JF-5).